A 496-amino-acid chain; its full sequence is Transcription termination factor MTERF9, chloroplastic (496 aa).

Residues 1 to 44 (MAGFSLYCFKNPRILFTLPSESPLFVLGSDKCSPATRRPSRKTR) constitute a chloroplast transit peptide. Disordered regions lie at residues 57 to 90 (IINP…DDDW) and 102 to 155 (YEKK…SWRL). The span at 74–90 (DSDEDDDDDDDDDDDDW) shows a compositional bias: acidic residues. Positions 105 to 123 (KKPKSHKQTIAKKSVKKGI) are enriched in basic residues. Residues 146–155 (SEKKKESWRL) show a composition bias toward basic and acidic residues.

Belongs to the mTERF family.

It localises to the plastid. It is found in the chloroplast. Transcription termination factor required for processing and steady-state levels of plastid transcripts. May play a role in response to abiotic stresses. In Arabidopsis thaliana (Mouse-ear cress), this protein is Transcription termination factor MTERF9, chloroplastic.